The chain runs to 387 residues: ATP phosphoribosyltransferase regulatory subunit (387 aa).

Belongs to the class-II aminoacyl-tRNA synthetase family. HisZ subfamily. Heteromultimer composed of HisG and HisZ subunits.

It is found in the cytoplasm. It participates in amino-acid biosynthesis; L-histidine biosynthesis; L-histidine from 5-phospho-alpha-D-ribose 1-diphosphate: step 1/9. In terms of biological role, required for the first step of histidine biosynthesis. May allow the feedback regulation of ATP phosphoribosyltransferase activity by histidine. This Polynucleobacter necessarius subsp. necessarius (strain STIR1) protein is ATP phosphoribosyltransferase regulatory subunit.